The chain runs to 460 residues: Cysteine--tRNA ligase (460 aa).

C28 is a binding site for Zn(2+). Residues 30–40 (VTIYDLCHIGH) carry the 'HIGH' region motif. Residues C209, H234, and E238 each contribute to the Zn(2+) site. Residues 266–270 (KMSKS) carry the 'KMSKS' region motif. K269 contributes to the ATP binding site.

This sequence belongs to the class-I aminoacyl-tRNA synthetase family. Monomer. Requires Zn(2+) as cofactor.

The protein localises to the cytoplasm. The catalysed reaction is tRNA(Cys) + L-cysteine + ATP = L-cysteinyl-tRNA(Cys) + AMP + diphosphate. The polypeptide is Cysteine--tRNA ligase (Vibrio vulnificus (strain YJ016)).